The following is a 308-amino-acid chain: Ornithine carbamoyltransferase (308 aa).

Carbamoyl phosphate is bound by residues 56–59, Gln83, Arg107, and 134–137; these read STRT and HPCQ. L-ornithine contacts are provided by residues Asn165, Asp225, and 229 to 230; that span reads SM. Residues 266–267 and Arg294 each bind carbamoyl phosphate; that span reads CL.

The protein belongs to the aspartate/ornithine carbamoyltransferase superfamily. OTCase family.

It localises to the cytoplasm. The enzyme catalyses carbamoyl phosphate + L-ornithine = L-citrulline + phosphate + H(+). It participates in amino-acid biosynthesis; L-arginine biosynthesis; L-arginine from L-ornithine and carbamoyl phosphate: step 1/3. Its function is as follows. Reversibly catalyzes the transfer of the carbamoyl group from carbamoyl phosphate (CP) to the N(epsilon) atom of ornithine (ORN) to produce L-citrulline. The chain is Ornithine carbamoyltransferase from Cereibacter sphaeroides (strain ATCC 17023 / DSM 158 / JCM 6121 / CCUG 31486 / LMG 2827 / NBRC 12203 / NCIMB 8253 / ATH 2.4.1.) (Rhodobacter sphaeroides).